The sequence spans 191 residues: Small ribosomal subunit protein uS7 (191 aa).

Residues 56 to 80 (NKSGEQGDGDGESGGKAGGIKKRSL) are disordered.

It belongs to the universal ribosomal protein uS7 family. Part of the 30S ribosomal subunit. Contacts proteins S9 and S11.

One of the primary rRNA binding proteins, it binds directly to 16S rRNA where it nucleates assembly of the head domain of the 30S subunit. Is located at the subunit interface close to the decoding center, probably blocks exit of the E-site tRNA. The polypeptide is Small ribosomal subunit protein uS7 (Coxiella burnetii (strain CbuK_Q154) (Coxiella burnetii (strain Q154))).